The primary structure comprises 222 residues: Transcriptional regulatory protein PmrA (222 aa).

Residues 2 to 116 (KLLIVEDDKL…ELQARVRALI (115 aa)) form the Response regulatory domain. Residue Asp-51 is modified to 4-aspartylphosphate. The ompR/PhoB-type DNA-binding region spans 124 to 218 (NSKIQVDNIT…LRGFGYLLTK (95 aa)).

Phosphorylated by PmrB.

The protein localises to the cytoplasm. In terms of biological role, member of the two-component regulatory system PmrB/PmrA involved in regulation of virulence. Unphosphorylated PmrA represses extracellular enzyme genes. Phosphorylation of PmrA by PmrB relieves such repression, which leads to activation of extracellular enzyme genes. Phosphorylated PmrA seems to repress expression of the pmrCAB operon. The sequence is that of Transcriptional regulatory protein PmrA (pmrA) from Pectobacterium parmentieri.